The following is a 117-amino-acid chain: Prefoldin subunit beta (117 aa).

It belongs to the prefoldin subunit beta family. As to quaternary structure, heterohexamer of two alpha and four beta subunits.

Its subcellular location is the cytoplasm. Molecular chaperone capable of stabilizing a range of proteins. Seems to fulfill an ATP-independent, HSP70-like function in archaeal de novo protein folding. This Methanosarcina barkeri (strain Fusaro / DSM 804) protein is Prefoldin subunit beta.